A 106-amino-acid polypeptide reads, in one-letter code: Small membrane A-kinase anchor protein (106 aa).

Gly-2 carries N-myristoyl glycine lipidation. Cys-3 is lipidated: S-palmitoyl cysteine. Ser-40 is modified (phosphoserine). Positions 62–85 (ALILEFADRLASEIVEDALQQWAC) are PKA-RI-binding. Ser-98 is subject to Phosphoserine.

Belongs to the small membrane AKAP family. In terms of assembly, interacts with PKA type I regulatory subunits PRKAR1A and PRKAR1B. Also binds to type II regulatory subunits, but at a tenfold lower affinity. Post-translationally, may be palmitoylated at Cys-3. As to expression, widely expressed, with very low levels in spleen and liver.

It localises to the cell membrane. Binds to type I regulatory subunits of protein kinase A (PKA-RI) and may anchor/target them to the plasma membrane. The protein is Small membrane A-kinase anchor protein of Mus musculus (Mouse).